We begin with the raw amino-acid sequence, 1367 residues long: DNA-directed RNA polymerase subunit beta' (1367 aa).

The disordered stretch occupies residues 1–34; the sequence is MTSTSPKSRKSSSKRKGSKKKAARSKNVIPPLSK. Positions 7–24 are enriched in basic residues; it reads KSRKSSSKRKGSKKKAAR. Cys-250, Cys-317, Cys-324, and Cys-327 together coordinate Zn(2+). The tract at residues 1306-1367 is disordered; the sequence is SVLDDPSDAD…LQEEGLLSDE (62 aa). The segment covering 1355 to 1367 has biased composition (low complexity); sequence LEGLQEEGLLSDE.

Belongs to the RNA polymerase beta' chain family. RpoC2 subfamily. In terms of assembly, in cyanobacteria the RNAP catalytic core is composed of 2 alpha, 1 beta, 1 beta', 1 gamma and 1 omega subunit. When a sigma factor is associated with the core the holoenzyme is formed, which can initiate transcription. Zn(2+) serves as cofactor.

It carries out the reaction RNA(n) + a ribonucleoside 5'-triphosphate = RNA(n+1) + diphosphate. Its function is as follows. DNA-dependent RNA polymerase catalyzes the transcription of DNA into RNA using the four ribonucleoside triphosphates as substrates. In Prochlorococcus marinus (strain SARG / CCMP1375 / SS120), this protein is DNA-directed RNA polymerase subunit beta'.